Here is a 118-residue protein sequence, read N- to C-terminus: Large ribosomal subunit protein bL19 (118 aa).

The protein belongs to the bacterial ribosomal protein bL19 family.

Functionally, this protein is located at the 30S-50S ribosomal subunit interface and may play a role in the structure and function of the aminoacyl-tRNA binding site. The sequence is that of Large ribosomal subunit protein bL19 from Campylobacter jejuni subsp. jejuni serotype O:2 (strain ATCC 700819 / NCTC 11168).